The following is a 209-amino-acid chain: Pyridoxine/pyridoxamine 5'-phosphate oxidase (209 aa).

Substrate contacts are provided by residues 7-10 (REDY) and K64. FMN is bound by residues 59–64 (RIVLLK), 74–75 (FT), R80, and K81. 3 residues coordinate substrate: Y121, R125, and S129. FMN-binding positions include 138 to 139 (QS) and W182. Substrate is bound at residue 188 to 190 (RLH). Position 192 (R192) interacts with FMN.

The protein belongs to the pyridoxamine 5'-phosphate oxidase family. In terms of assembly, homodimer. FMN is required as a cofactor.

It carries out the reaction pyridoxamine 5'-phosphate + O2 + H2O = pyridoxal 5'-phosphate + H2O2 + NH4(+). The enzyme catalyses pyridoxine 5'-phosphate + O2 = pyridoxal 5'-phosphate + H2O2. It participates in cofactor metabolism; pyridoxal 5'-phosphate salvage; pyridoxal 5'-phosphate from pyridoxamine 5'-phosphate: step 1/1. Its pathway is cofactor metabolism; pyridoxal 5'-phosphate salvage; pyridoxal 5'-phosphate from pyridoxine 5'-phosphate: step 1/1. Functionally, catalyzes the oxidation of either pyridoxine 5'-phosphate (PNP) or pyridoxamine 5'-phosphate (PMP) into pyridoxal 5'-phosphate (PLP). The sequence is that of Pyridoxine/pyridoxamine 5'-phosphate oxidase from Actinobacillus pleuropneumoniae serotype 5b (strain L20).